An 806-amino-acid chain; its full sequence is Volume-regulated anion channel subunit LRRC8E (806 aa).

At M1–P22 the chain is on the cytoplasmic side. The helical transmembrane segment at W23–C43 threads the bilayer. The Extracellular portion of the chain corresponds to T44 to K130. Residues C54 and C311 are joined by a disulfide bond. Residues N57 and N80 are each glycosylated (N-linked (GlcNAc...) asparagine). The interval Q75–L104 is disordered. Residues Y131–F151 traverse the membrane as a helical segment. At K152–K275 the chain is on the cytoplasmic side. A disordered region spans residues E182–L217. Basic and acidic residues predominate over residues S188 to F207. A helical membrane pass occupies residues F276 to C296. Residues S297 to A323 lie on the Extracellular side of the membrane. N-linked (GlcNAc...) asparagine glycosylation is present at N312. Residues I324–L344 form a helical membrane-spanning segment. Over F345–D806 the chain is Cytoplasmic. LRR repeat units follow at residues H569–K589, L593–L614, N616–Q637, K641–L662, G664–C685, K687–L708, L710–C731, K733–L754, and C756–C777.

Belongs to the LRRC8 family. In terms of assembly, heterohexamer; oligomerizes with other LRRC8 proteins (lrrc8a, lrrc8c, lrrc8d and/or lrrc8b) to form a heterohexamer. Detected in a channel complex that contains lrrc8a, lrrc8c and lrrc8e. In vivo, the subunit composition may depend primarily on expression levels, and heterooligomeric channels containing various proportions of the different LRRC8 proteins may coexist.

It is found in the cell membrane. It localises to the endoplasmic reticulum membrane. The protein localises to the lysosome membrane. It catalyses the reaction chloride(in) = chloride(out). The enzyme catalyses iodide(out) = iodide(in). It carries out the reaction taurine(out) = taurine(in). The catalysed reaction is 2',3'-cGAMP(out) = 2',3'-cGAMP(in). In terms of biological role, non-essential component of the volume-regulated anion channel (VRAC, also named VSOAC channel), an anion channel required to maintain a constant cell volume in response to extracellular or intracellular osmotic changes. The VRAC channel conducts iodide better than chloride and can also conduct organic osmolytes like taurine. Mediates efflux of amino acids, such as aspartate, in response to osmotic stress. The VRAC channel also mediates transport of immunoreactive cyclic dinucleotide GMP-AMP (2'-3'-cGAMP), an immune messenger produced in response to DNA virus in the cytosol. Channel activity requires lrrc8a plus at least one other family member (lrrc8b, lrrc8c, lrrc8d or lrrc8e); channel characteristics depend on the precise subunit composition. Also plays a role in lysosome homeostasis by forming functional lysosomal VRAC channels in response to low cytoplasmic ionic strength condition: lysosomal VRAC channels are necessary for the formation of large lysosome-derived vacuoles, which store and then expel excess water to maintain cytosolic water homeostasis. The protein is Volume-regulated anion channel subunit LRRC8E of Xenopus laevis (African clawed frog).